The following is a 4544-amino-acid chain: Prolow-density lipoprotein receptor-related protein 1 (4544 aa).

A signal peptide spans methionine 1–alanine 19. Residues alanine 20–glycine 4419 are Extracellular-facing. LDL-receptor class A domains lie at lysine 25–glutamine 66 and glutamine 70–glutamate 110. 6 disulfides stabilise this stretch: cysteine 27-cysteine 40, cysteine 34-cysteine 53, cysteine 47-cysteine 64, cysteine 72-cysteine 85, cysteine 79-cysteine 98, and cysteine 92-cysteine 108. An EGF-like 1 domain is found at leucine 111–lysine 149. Residue asparagine 114 is glycosylated (N-linked (GlcNAc...) asparagine). 6 disulfide bridges follow: cysteine 115–cysteine 124, cysteine 120–cysteine 133, cysteine 135–cysteine 148, cysteine 154–cysteine 164, cysteine 160–cysteine 173, and cysteine 175–cysteine 188. Asparagine 136 carries an N-linked (GlcNAc...) asparagine glycan. In terms of domain architecture, EGF-like 2; calcium-binding spans aspartate 150–lysine 189. Asparagine 185, asparagine 239, and asparagine 274 each carry an N-linked (GlcNAc...) asparagine glycan. LDL-receptor class B repeat units lie at residues glycine 292 to methionine 334, glycine 335 to serine 378, and arginine 379 to tyrosine 422. N-linked (GlcNAc...) asparagine glycosylation occurs at asparagine 357. N-linked (GlcNAc...) asparagine glycosylation occurs at asparagine 446. An EGF-like 3 domain is found at arginine 474–lysine 520. 3 disulfide bridges follow: cysteine 478/cysteine 493, cysteine 489/cysteine 504, and cysteine 506/cysteine 519. 4 LDL-receptor class B repeats span residues glycine 571–glycine 613, aspartate 614–asparagine 659, glycine 660–alanine 710, and glycine 711–tyrosine 754. Asparagine 729 is a glycosylation site (N-linked (GlcNAc...) (complex) asparagine). The EGF-like 4 domain occupies glycine 803–leucine 843. Intrachain disulfides connect cysteine 807–cysteine 818, cysteine 814–cysteine 827, cysteine 829–cysteine 842, cysteine 854–cysteine 866, cysteine 861–cysteine 879, cysteine 873–cysteine 890, cysteine 895–cysteine 907, cysteine 902–cysteine 920, cysteine 914–cysteine 931, cysteine 936–cysteine 948, cysteine 943–cysteine 961, cysteine 955–cysteine 971, cysteine 976–cysteine 989, cysteine 984–cysteine 1002, cysteine 996–cysteine 1011, cysteine 1015–cysteine 1027, cysteine 1022–cysteine 1040, cysteine 1034–cysteine 1051, cysteine 1062–cysteine 1075, cysteine 1069–cysteine 1088, cysteine 1082–cysteine 1097, cysteine 1104–cysteine 1118, cysteine 1112–cysteine 1131, cysteine 1125–cysteine 1140, cysteine 1145–cysteine 1159, cysteine 1152–cysteine 1172, cysteine 1166–cysteine 1182, cysteine 1185–cysteine 1196, cysteine 1192–cysteine 1206, cysteine 1208–cysteine 1221, cysteine 1227–cysteine 1237, cysteine 1233–cysteine 1246, and cysteine 1248–cysteine 1261. LDL-receptor class A domains are found at residues proline 852–glutamine 892, histidine 893–alanine 933, arginine 934–tyrosine 973, proline 974–histidine 1013, histidine 1013–asparagine 1053, glycine 1060–glycine 1099, histidine 1102–serine 1142, and leucine 1143–cysteine 1182. Ca(2+) is bound by residues tryptophan 871, aspartate 874, aspartate 876, aspartate 878, aspartate 884, and glutamate 885. Asparagine 928 carries an N-linked (GlcNAc...) asparagine glycan. Ca(2+)-binding residues include tryptophan 1032, aspartate 1035, aspartate 1037, aspartate 1039, aspartate 1045, and glutamate 1046. Asparagine 1050 carries an N-linked (GlcNAc...) asparagine glycan. The Ca(2+) site is built by tryptophan 1080, aspartate 1083, aspartate 1085, aspartate 1087, aspartate 1093, and glutamate 1094. Residues asparagine 1154 and asparagine 1155 are each glycosylated (N-linked (GlcNAc...) asparagine). EGF-like domains follow at residues aspartate 1183–glutamine 1222 and isoleucine 1223–arginine 1262. N-linked (GlcNAc...) asparagine glycosylation is found at asparagine 1195 and asparagine 1218. LDL-receptor class B repeat units lie at residues serine 1309–alanine 1355, glycine 1356–aspartate 1398, glycine 1399–glutamate 1445, lysine 1446–glutamate 1490, and valine 1491–serine 1531. Residue asparagine 1511 is glycosylated (N-linked (GlcNAc...) (complex) asparagine). Residues alanine 1536 to tyrosine 1579 enclose the EGF-like 7 domain. 3 disulfide bridges follow: cysteine 1540–cysteine 1553, cysteine 1549–cysteine 1563, and cysteine 1565–cysteine 1578. N-linked (GlcNAc...) asparagine glycans are attached at residues asparagine 1558, asparagine 1575, asparagine 1616, and asparagine 1645. LDL-receptor class B repeat units lie at residues glutamine 1627–serine 1669, arginine 1670–arginine 1713, glycine 1714–glutamate 1753, and serine 1754–lysine 1798. Asparagine 1723, asparagine 1733, asparagine 1763, and asparagine 1825 each carry an N-linked (GlcNAc...) asparagine glycan. An EGF-like 8 domain is found at glycine 1846 to glutamate 1887. Disulfide bonds link cysteine 1850/cysteine 1861, cysteine 1857/cysteine 1871, and cysteine 1873/cysteine 1886. The N-linked (GlcNAc...) asparagine glycan is linked to asparagine 1933. 4 LDL-receptor class B repeats span residues aspartate 1934–alanine 1976, glycine 1977–lysine 2019, glycine 2020–aspartate 2063, and glycine 2064–phenylalanine 2107. Asparagine 1995 carries an N-linked (GlcNAc...) asparagine glycan. The residue at position 2009 (lysine 2009) is an N6-acetyllysine. A glycan (N-linked (GlcNAc...) asparagine) is linked at asparagine 2048. 2 N-linked (GlcNAc...) asparagine glycosylation sites follow: asparagine 2117 and asparagine 2127. The EGF-like 9 domain maps to glycine 2155–arginine 2195. 3 disulfide bridges follow: cysteine 2159/cysteine 2170, cysteine 2166/cysteine 2180, and cysteine 2182/cysteine 2194. LDL-receptor class B repeat units lie at residues asparagine 2253–tryptophan 2294, aspartate 2295–glutamine 2343, asparagine 2344–alanine 2388, glutamate 2389–histidine 2431, and isoleucine 2432–aspartate 2473. Asparagine 2472 carries an N-linked (GlcNAc...) asparagine glycan. The 41-residue stretch at glutamate 2478–arginine 2518 folds into the EGF-like 10 domain. 3 cysteine pairs are disulfide-bonded: cysteine 2482/cysteine 2493, cysteine 2489/cysteine 2503, and cysteine 2505/cysteine 2517. Asparagine 2502 is a glycosylation site (N-linked (GlcNAc...) asparagine). The N-linked (GlcNAc...) asparagine glycan is linked to asparagine 2521. 7 LDL-receptor class A domains span residues serine 2522 to serine 2563, arginine 2564 to lysine 2602, threonine 2603 to alanine 2641, threonine 2642 to glycine 2690, proline 2694 to lysine 2732, lysine 2732 to glycine 2771, and lysine 2772 to tyrosine 2814. Disulfide bonds link cysteine 2524-cysteine 2537, cysteine 2532-cysteine 2550, cysteine 2544-cysteine 2561, cysteine 2566-cysteine 2578, cysteine 2573-cysteine 2591, and cysteine 2585-cysteine 2600. Residue asparagine 2539 is glycosylated (N-linked (GlcNAc...) asparagine). The N-linked (GlcNAc...) asparagine glycan is linked to asparagine 2601. 15 disulfide bridges follow: cysteine 2605-cysteine 2617, cysteine 2612-cysteine 2630, cysteine 2624-cysteine 2639, cysteine 2644-cysteine 2666, cysteine 2660-cysteine 2679, cysteine 2673-cysteine 2688, cysteine 2696-cysteine 2708, cysteine 2703-cysteine 2721, cysteine 2715-cysteine 2730, cysteine 2734-cysteine 2746, cysteine 2741-cysteine 2759, cysteine 2753-cysteine 2769, cysteine 2774-cysteine 2787, cysteine 2781-cysteine 2800, and cysteine 2794-cysteine 2812. 2 N-linked (GlcNAc...) asparagine glycosylation sites follow: asparagine 2620 and asparagine 2638. Asparagine 2815 carries N-linked (GlcNAc...) asparagine glycosylation. 3 consecutive LDL-receptor class A domains span residues serine 2816–tyrosine 2855, proline 2856–serine 2899, and histidine 2902–histidine 2940. Intrachain disulfides connect cysteine 2818–cysteine 2830, cysteine 2825–cysteine 2843, cysteine 2837–cysteine 2853, cysteine 2858–cysteine 2870, cysteine 2865–cysteine 2884, cysteine 2878–cysteine 2897, cysteine 2904–cysteine 2917, cysteine 2912–cysteine 2930, cysteine 2924–cysteine 2939, cysteine 2944–cysteine 2956, cysteine 2952–cysteine 2965, cysteine 2967–cysteine 2980, cysteine 2986–cysteine 2996, cysteine 2992–cysteine 3005, and cysteine 3007–cysteine 3021. The N-linked (GlcNAc...) asparagine glycan is linked to asparagine 2905. One can recognise an EGF-like 11 domain in the interval isoleucine 2941–alanine 2981. The EGF-like 12; calcium-binding domain maps to aspartate 2982–lysine 3022. Asparagine 3048 and asparagine 3089 each carry an N-linked (GlcNAc...) asparagine glycan. LDL-receptor class B repeat units follow at residues glutamine 3069–glycine 3113, glycine 3114–asparagine 3156, glycine 3157–threonine 3200, glutamate 3201–tyrosine 3243, and valine 3244–leucine 3284. An N-linked (GlcNAc...) asparagine glycan is attached at asparagine 3264. The 42-residue stretch at proline 3290 to valine 3331 folds into the EGF-like 13 domain. Intrachain disulfides connect cysteine 3294/cysteine 3305, cysteine 3301/cysteine 3315, and cysteine 3317/cysteine 3330. 11 consecutive LDL-receptor class A domains span residues serine 3332–glutamate 3371, phenylalanine 3372–isoleucine 3410, histidine 3411–glutamate 3450, valine 3451–glutamine 3491, methionine 3492–glutamate 3533, arginine 3534–proline 3572, arginine 3573–proline 3611, proline 3611–threonine 3649, arginine 3652–arginine 3692, phenylalanine 3693–proline 3733, and threonine 3739–isoleucine 3778. Asparagine 3333 carries N-linked (GlcNAc...) asparagine glycosylation. 39 cysteine pairs are disulfide-bonded: cysteine 3334/cysteine 3346, cysteine 3341/cysteine 3359, cysteine 3353/cysteine 3369, cysteine 3374/cysteine 3386, cysteine 3381/cysteine 3399, cysteine 3393/cysteine 3408, cysteine 3413/cysteine 3426, cysteine 3420/cysteine 3439, cysteine 3433/cysteine 3448, cysteine 3453/cysteine 3466, cysteine 3460/cysteine 3479, cysteine 3473/cysteine 3489, cysteine 3494/cysteine 3507, cysteine 3501/cysteine 3520, cysteine 3514/cysteine 3531, cysteine 3536/cysteine 3548, cysteine 3543/cysteine 3561, cysteine 3555/cysteine 3570, cysteine 3575/cysteine 3587, cysteine 3582/cysteine 3600, cysteine 3594/cysteine 3609, cysteine 3613/cysteine 3625, cysteine 3620/cysteine 3638, cysteine 3632/cysteine 3647, cysteine 3654/cysteine 3666, cysteine 3661/cysteine 3679, cysteine 3673/cysteine 3690, cysteine 3695/cysteine 3709, cysteine 3703/cysteine 3722, cysteine 3716/cysteine 3731, cysteine 3741/cysteine 3754, cysteine 3749/cysteine 3767, cysteine 3761/cysteine 3776, cysteine 3785/cysteine 3798, cysteine 3792/cysteine 3807, cysteine 3809/cysteine 3822, cysteine 3828/cysteine 3838, cysteine 3834/cysteine 3847, and cysteine 3849/cysteine 3860. The N-linked (GlcNAc...) asparagine glycan is linked to asparagine 3488. Asparagine 3662 carries an N-linked (GlcNAc...) asparagine glycan. EGF-like domains lie at lysine 3781 to glutamine 3823 and aspartate 3824 to lysine 3861. Asparagine 3788 carries N-linked (GlcNAc...) asparagine glycosylation. Asparagine 3839 carries N-linked (GlcNAc...) asparagine glycosylation. 4 LDL-receptor class B repeats span residues glycine 3912–isoleucine 3954, glycine 3970–arginine 4012, glycine 4013–asparagine 4056, and glutamate 4057–tyrosine 4101. The Recognition site for proteolytical processing signature appears at arginine 3940–arginine 3943. N-linked (GlcNAc...) asparagine glycosylation occurs at asparagine 3953. N-linked (GlcNAc...) asparagine glycosylation is found at asparagine 4075 and asparagine 4125. EGF-like domains follow at residues valine 4147–valine 4183, arginine 4196–glutamate 4232, glutamate 4232–threonine 4268, threonine 4268–glutamine 4304, glutamine 4304–glutamate 4340, glutamate 4340–leucine 4375, and serine 4373–glutamate 4409. Disulfide bonds link cysteine 4151–cysteine 4160, cysteine 4156–cysteine 4169, cysteine 4171–cysteine 4182, cysteine 4200–cysteine 4210, cysteine 4204–cysteine 4220, cysteine 4222–cysteine 4231, cysteine 4236–cysteine 4246, cysteine 4240–cysteine 4256, cysteine 4258–cysteine 4267, cysteine 4272–cysteine 4282, cysteine 4276–cysteine 4292, cysteine 4294–cysteine 4303, cysteine 4308–cysteine 4318, cysteine 4312–cysteine 4328, cysteine 4330–cysteine 4339, cysteine 4344–cysteine 4352, and cysteine 4347–cysteine 4363. Asparagine 4179 is a glycosylation site (N-linked (GlcNAc...) asparagine). Residues asparagine 4278 and asparagine 4279 are each glycosylated (N-linked (GlcNAc...) asparagine). Residue asparagine 4364 is glycosylated (N-linked (GlcNAc...) asparagine). Cystine bridges form between cysteine 4365-cysteine 4374, cysteine 4377-cysteine 4387, cysteine 4381-cysteine 4397, and cysteine 4399-cysteine 4408. A helical transmembrane segment spans residues histidine 4420–tyrosine 4444. At lysine 4445–alanine 4544 the chain is on the cytoplasmic side. The interval lysine 4445–alanine 4544 is interaction with MAFB. Threonine 4460 bears the Phosphothreonine mark. Positions phenylalanine 4502–tyrosine 4507 match the NPXY motif motif. The residue at position 4507 (tyrosine 4507) is a Phosphotyrosine. A phosphoserine mark is found at serine 4517, serine 4520, and serine 4523.

Belongs to the LDLR family. Heterodimer of an 85-kDa membrane-bound carboxyl subunit and a non-covalently attached 515-kDa N-terminal subunit. Intracellular domain interacts with MAFB. Found in a complex with PID1/PCLI1, LRP1 and CUBNI. Interacts with SNX17, PID1/PCLI1, PDGF and CUBN. The intracellular domain interacts with SHC1, GULP1 and DAB1. Can weakly interact (via NPXY motif) with DAB2 (via PID domain); the interaction is enhanced by tyrosine phosphorylation of the NPXY motif. Interacts with MDK; promotes neuronal survival. Interacts with LRPAP1; this interaction is followed by rapid internalization. Interacts with uPA/PLAU and PAI1/SERPINE1, either individually or in complex with each other, leading to rapid endocytosis; this interaction is abolished in the presence of LRPAP1/RAP. Also interacts with tPA/PLAT alone or in complex with SERPINE1. Interacts with the urokinase receptor PLAUR; this interaction leads to PLAUR internalization and is impaired in the presence of SORL1. Interacts with PDGFB. Interacts with TAU/MAPT, leading to endocytosis; this interaction is reduced in the presence of LRPAP1/RAP. Interacts with IGFBP3; this interaction mediates cell growth inhibition independently of IGF1. Interacts with ADGRG6. As to quaternary structure, (Microbial infection) Interacts with bacterial exotoxins. In terms of assembly, (Microbial infection) Interacts with Rift valley fever virus (RVFV) glycoprotein N; this interaction facilitates virus entry. In terms of processing, cleaved into a 85 kDa membrane-spanning subunit (LRP-85) and a 515 kDa large extracellular domain (LRP-515) that remains non-covalently associated. Gamma-secretase-dependent cleavage of LRP-85 releases the intracellular domain from the membrane. The N-terminus is blocked. Post-translationally, phosphorylated on serine and threonine residues. In terms of processing, phosphorylated on tyrosine residues upon stimulation with PDGF. Tyrosine phosphorylation promotes interaction with SHC1. Most abundant in liver, brain and lung.

Its subcellular location is the cell membrane. The protein localises to the membrane. It is found in the coated pit. It localises to the cytoplasm. The protein resides in the nucleus. Its subcellular location is the golgi outpost. The protein localises to the cytoskeleton. It is found in the microtubule organizing center. Its function is as follows. Endocytic receptor involved in endocytosis and in phagocytosis of apoptotic cells. Required for early embryonic development. Involved in cellular lipid homeostasis. Involved in the plasma clearance of chylomicron remnants and activated LRPAP1 (alpha 2-macroglobulin), as well as the local metabolism of complexes between plasminogen activators and their endogenous inhibitors. Acts as an LRPAP1 alpha-2-macroglobulin receptor. Acts as TAU/MAPT receptor and controls the endocytosis of TAU/MAPT as well as its subsequent spread. May modulate cellular events, such as APP metabolism, kinase-dependent intracellular signaling, neuronal calcium signaling as well as neurotransmission. Also acts as a receptor for IGFBP3 to mediate cell growth inhibition. Functionally, (Microbial infection) Functions as a receptor for Pseudomonas aeruginosa exotoxin A. The polypeptide is Prolow-density lipoprotein receptor-related protein 1 (Homo sapiens (Human)).